Consider the following 215-residue polypeptide: MSEKNPIVGLCQKASFLISAAQVDQCPPDEGLEVAFAGRSNAGKSSALNTLTHANLARTSKTPGRTQLLNFFALDDSRRLVDLPGYGYAKVPIPLKQHWQRHLEAYLSSRASLAGVFLMMDIRHPLTDFDRLMLDWAQASQLPIHVLMTKADKLAFGAAKNALLKVRREVQQGWGDVATLQLFSAPKRQGVDEAQMVLAQWLGLLDEEQEAFEEA.

The EngB-type G domain occupies 30–204 (EGLEVAFAGR…QMVLAQWLGL (175 aa)). GTP-binding positions include 38 to 45 (GRSNAGKS), 64 to 68 (GRTQL), 82 to 85 (DLPG), 149 to 152 (TKAD), and 182 to 185 (LFSA). Serine 45 and threonine 66 together coordinate Mg(2+).

It belongs to the TRAFAC class TrmE-Era-EngA-EngB-Septin-like GTPase superfamily. EngB GTPase family. Mg(2+) is required as a cofactor.

Functionally, necessary for normal cell division and for the maintenance of normal septation. In Pseudomonas aeruginosa (strain ATCC 15692 / DSM 22644 / CIP 104116 / JCM 14847 / LMG 12228 / 1C / PRS 101 / PAO1), this protein is Probable GTP-binding protein EngB.